Reading from the N-terminus, the 256-residue chain is DNA repair protein RecO (256 aa).

This sequence belongs to the RecO family.

Its function is as follows. Involved in DNA repair and RecF pathway recombination. The sequence is that of DNA repair protein RecO from Streptococcus pneumoniae (strain Hungary19A-6).